A 271-amino-acid chain; its full sequence is L-aspartate dehydrogenase (271 aa).

Residues Ala-124 and Asn-192 each contribute to the NAD(+) site. Residue His-222 is part of the active site.

Belongs to the L-aspartate dehydrogenase family.

The enzyme catalyses L-aspartate + NADP(+) + H2O = oxaloacetate + NH4(+) + NADPH + H(+). The catalysed reaction is L-aspartate + NAD(+) + H2O = oxaloacetate + NH4(+) + NADH + H(+). It participates in cofactor biosynthesis; NAD(+) biosynthesis; iminoaspartate from L-aspartate (dehydrogenase route): step 1/1. Specifically catalyzes the NAD or NADP-dependent dehydrogenation of L-aspartate to iminoaspartate. The chain is L-aspartate dehydrogenase from Methanosarcina acetivorans (strain ATCC 35395 / DSM 2834 / JCM 12185 / C2A).